Here is a 337-residue protein sequence, read N- to C-terminus: Oxidoreductase andH (337 aa).

The protein belongs to the NmrA-type oxidoreductase family.

It participates in secondary metabolite biosynthesis; terpenoid biosynthesis. Oxidoreductase; part of the gene cluster that mediates the biosynthesis of anditomin, a fungal meroterpenoid. The first step of the pathway is the synthesis of 3,5-dimethylorsellinic acid (DMOA) by the polyketide synthase andM. DMOA is then converted to the phthalide compound 5,7-dihydroxy-4,6-dimethylphthalide (DHDMP) by the cytochrome P450 monooxygenase andK, which is further prenylated by the prenyltransferase andD to yield farnesyl-DHDMP. Further epoxidation by the FAD-dependent monooxygenase andE leads to epoxyfarnesyl-DHDMP. The next step involves the terpene cyclase andB that converts epoxyfarnesyl-DHDMP into preandiloid A through opening of the epoxide ring followed by the cyclization of the farnesyl moiety. Preandiloid A is in turn oxidized at the C-3 hydroxyl group to yield preandiloid B by the dehydrogenase andC. The dioxygenase andA is solely responsible for the dehydrogenation of preandiloid B leading to the enone preandiloid C, as well as for the intriguing structural rearrangement to generate the bicyclo[2.2.2]octane core, transforming preandiloid C into andiconin. FAD-binding monooxygenase andJ then produces andilesin D which is reduced by dehydrogenase andI to yield andilesin A. Action of acetyltransferase andG followed by a spontaneous acetate elimination leads then to andilesin B, which is in turn substrate of the short chain dehydrogenase andH to yield andilesin C. Finally, the dioxygenase andF catalyzes the transformation of andilesin C to anditomin. The protein is Oxidoreductase andH of Emericella variicolor (Aspergillus stellatus).